Here is a 664-residue protein sequence, read N- to C-terminus: UvrABC system protein C (664 aa).

The GIY-YIG domain occupies 63–141 (LRPGVYRMYD…IKRYRPPYNI (79 aa)). The 36-residue stretch at 254-289 (THVQKKLVTAMEQASNDLNYELAAVYRDRLKALAFI) folds into the UVR domain.

This sequence belongs to the UvrC family. As to quaternary structure, interacts with UvrB in an incision complex.

The protein resides in the cytoplasm. Functionally, the UvrABC repair system catalyzes the recognition and processing of DNA lesions. UvrC both incises the 5' and 3' sides of the lesion. The N-terminal half is responsible for the 3' incision and the C-terminal half is responsible for the 5' incision. The sequence is that of UvrABC system protein C from Zymomonas mobilis subsp. mobilis (strain ATCC 31821 / ZM4 / CP4).